A 742-amino-acid polypeptide reads, in one-letter code: Two-component response regulator-like PRR37 (742 aa).

The Response regulatory domain occupies 63–181 (KVLLVDSDDS…ELKNLWQHVW (119 aa)). Residues 186-195 (SSSGSGSESG) are compositionally biased toward low complexity. 7 disordered regions span residues 186-249 (SSSG…SWTK), 290-346 (PCTS…PLQN), 377-402 (QQAA…NRDN), 478-517 (MKSN…NKER), 533-568 (FHPA…GEVQ), 590-671 (NGGS…GNDM), and 697-742 (NFGK…AADR). Over residues 236–248 (DNGSGTQAQSSWT) the composition is skewed to polar residues. The segment covering 299-313 (KQKETNDDFKGKDLE) has biased composition (basic and acidic residues). Polar residues predominate over residues 318 to 330 (RNLNTAYQSSPNE). Over residues 331 to 341 (RSIKPTDRRNE) the composition is skewed to basic and acidic residues. Over residues 490 to 502 (GSNGSSNNNDMGS) the composition is skewed to low complexity. Residues 503–512 (TTKNVVTKPS) are compositionally biased toward polar residues. Low complexity predominate over residues 618 to 634 (NGSNSGSNNGSNGQNGS). A compositionally biased stretch (gly residues) spans 656–667 (GPGGGNGSGSGS). The CCT domain maps to 682-724 (RVAAVIKFRQKRKERNFGKKVRYQSRKRLAEQRPRVRGQFVRQ). Basic residues predominate over residues 697-708 (NFGKKVRYQSRK). A compositionally biased stretch (low complexity) spans 719–731 (GQFVRQAVQDQQQ).

The protein belongs to the ARR-like family.

Its subcellular location is the nucleus. Functionally, probable transcription factor involved in the regulation of flowering time under long day (LD) conditions. Functions as a repressor of flowering. Controls flowering time by negatively regulating the expression of HD3A. Acts downstream of the phytochrome B to repress the expression of EHD1, an activator of the flowering promoter genes HD3A and RFT1. Controls photoperiodic flowering response. Seems to be one of the component of the circadian clock. Expression of several members of the ARR-like family is controlled by circadian rhythm. The particular coordinated sequential expression of PRR73, PRR37, PRR95, PRR59 and PPR1 result to circadian waves that may be at the basis of the endogenous circadian clock. This Oryza sativa subsp. japonica (Rice) protein is Two-component response regulator-like PRR37.